Consider the following 111-residue polypeptide: Large ribosomal subunit protein P1 (111 aa).

Residues 75–111 (AAAPAAEEKAEEEKKEEEEEKKEEEVDLSGLSGMFGF) form a disordered region. Acidic residues predominate over residues 88–101 (KKEEEEEKKEEEVD).

It belongs to the eukaryotic ribosomal protein P1/P2 family. In terms of assembly, part of the 50S ribosomal subunit. Homodimer, it forms part of the ribosomal stalk which helps the ribosome interact with GTP-bound translation factors. Forms a heptameric uL10/P0(P1)2(P1)2(P1)2 complex, where uL10/P0 forms an elongated spine to which the P1 dimers bind in a sequential fashion.

Functionally, forms part of the ribosomal stalk, playing a central role in the interaction of the ribosome with GTP-bound translation factors. The chain is Large ribosomal subunit protein P1 from Aeropyrum pernix (strain ATCC 700893 / DSM 11879 / JCM 9820 / NBRC 100138 / K1).